The sequence spans 111 residues: UPF0060 membrane protein HCH_03337 (111 aa).

A run of 4 helical transmembrane segments spans residues 8–28 (LLFAVTAITEIVGCYLPWLVI), 33–53 (SLWLLVPAALSLAIFAWLLTL), 65–85 (YGGMYVVVALIWLHFVEGVGL), and 88–108 (FDFLGATMALAGMAIIALQPI).

The protein belongs to the UPF0060 family.

The protein resides in the cell inner membrane. This Hahella chejuensis (strain KCTC 2396) protein is UPF0060 membrane protein HCH_03337.